The following is a 2293-amino-acid chain: Protein Ycf2 (2293 aa).

1647 to 1654 contributes to the ATP binding site; it reads GSIGTGRS.

This sequence belongs to the Ycf2 family.

The protein localises to the plastid. It is found in the chloroplast stroma. In terms of biological role, probable ATPase of unknown function. Its presence in a non-photosynthetic plant (Epifagus virginiana) and experiments in tobacco indicate that it has an essential function which is probably not related to photosynthesis. This chain is Protein Ycf2, found in Lobularia maritima (Sweet alyssum).